A 164-amino-acid chain; its full sequence is MAEDSTNQQTSEQGQQAQFAIQKIYVKDLSFETPNSPHIFNQEQEWKPEFNLQLSNKNQRIAENVHEVVLSLTVTAKLGDQTAFLVEVHQAGIFMLNGYGEESLGSLLGSYCPNILFPFAREVVADLVTKGGFPPLLLAPVNFDALYAQQQQQRQSAGAAEVRH.

The protein belongs to the SecB family. Homotetramer, a dimer of dimers. One homotetramer interacts with 1 SecA dimer.

The protein localises to the cytoplasm. Its function is as follows. One of the proteins required for the normal export of preproteins out of the cell cytoplasm. It is a molecular chaperone that binds to a subset of precursor proteins, maintaining them in a translocation-competent state. It also specifically binds to its receptor SecA. This chain is Protein-export protein SecB, found in Nitrosococcus oceani (strain ATCC 19707 / BCRC 17464 / JCM 30415 / NCIMB 11848 / C-107).